The primary structure comprises 470 residues: ATP synthase subunit beta (470 aa).

ATP is bound at residue G157–T164.

The protein belongs to the ATPase alpha/beta chains family. In terms of assembly, F-type ATPases have 2 components, CF(1) - the catalytic core - and CF(0) - the membrane proton channel. CF(1) has five subunits: alpha(3), beta(3), gamma(1), delta(1), epsilon(1). CF(0) has three main subunits: a(1), b(2) and c(9-12). The alpha and beta chains form an alternating ring which encloses part of the gamma chain. CF(1) is attached to CF(0) by a central stalk formed by the gamma and epsilon chains, while a peripheral stalk is formed by the delta and b chains.

The protein localises to the cell inner membrane. It carries out the reaction ATP + H2O + 4 H(+)(in) = ADP + phosphate + 5 H(+)(out). Functionally, produces ATP from ADP in the presence of a proton gradient across the membrane. The catalytic sites are hosted primarily by the beta subunits. This Geotalea daltonii (strain DSM 22248 / JCM 15807 / FRC-32) (Geobacter daltonii) protein is ATP synthase subunit beta.